Here is a 327-residue protein sequence, read N- to C-terminus: Fructose import binding protein FruE (327 aa).

An N-terminal signal peptide occupies residues 1-22 (MKNWKKAIALVASAAALVSVAA). Cys-23 carries N-palmitoyl cysteine lipidation. Cys-23 carries the S-diacylglycerol cysteine lipid modification.

The protein belongs to the bacterial solute-binding protein 2 family. In terms of assembly, the complex is composed of an ATP-binding protein (FruK), two transmembrane proteins (FruF and FruG) and a solute-binding protein (FruE).

The protein localises to the cell membrane. Functionally, part of the high-affinity ABC transporter complex FruEKFG involved in fructose uptake. Can also transport ribose and xylose, with lower affinity. Binds fructose, ribose and xylose, with fructose as the preferred substrate. This is Fructose import binding protein FruE from Bifidobacterium longum (strain NCC 2705).